Reading from the N-terminus, the 340-residue chain is 4-amino-5-hydroxymethyl-2-methylpyrimidine phosphate synthase THI5 (340 aa).

Lys-62 carries the N6-(pyridoxal phosphate)lysine modification. His-66 is an active-site residue. A pyridoxal 5'-phosphate-binding site is contributed by 115-118 (GEFG). The CCCFC; essential for catalytic activity, may be the site of iron coordination motif lies at 195–199 (CCCFC).

Belongs to the NMT1/THI5 family. Homodimer. It depends on Fe cation as a cofactor.

The enzyme catalyses N(6)-(pyridoxal phosphate)-L-lysyl-[4-amino-5-hydroxymethyl-2-methylpyrimidine phosphate synthase] + L-histidyl-[4-amino-5-hydroxymethyl-2-methylpyrimidine phosphate synthase] + 2 Fe(3+) + 4 H2O = L-lysyl-[4-amino-5-hydroxymethyl-2-methylpyrimidine phosphate synthase] + (2S)-2-amino-5-hydroxy-4-oxopentanoyl-[4-amino-5-hydroxymethyl-2-methylpyrimidine phosphate synthase] + 4-amino-2-methyl-5-(phosphooxymethyl)pyrimidine + 3-oxopropanoate + 2 Fe(2+) + 2 H(+). Its pathway is cofactor biosynthesis; thiamine diphosphate biosynthesis. Its function is as follows. Responsible for the formation of the pyrimidine heterocycle in the thiamine biosynthesis pathway. Catalyzes the formation of hydroxymethylpyrimidine phosphate (HMP-P) from histidine and pyridoxal phosphate (PLP). The protein uses PLP and the active site histidine to form HMP-P, generating an inactive enzyme. The enzyme can only undergo a single turnover, which suggests it is a suicide enzyme. This chain is 4-amino-5-hydroxymethyl-2-methylpyrimidine phosphate synthase THI5, found in Saccharomyces cerevisiae (strain ATCC 204508 / S288c) (Baker's yeast).